Consider the following 254-residue polypeptide: Nickel import ATP-binding protein NikD (254 aa).

An ABC transporter domain is found at 2–241 (PQQIELRDIA…PKHAVTRSLV (240 aa)). 36–43 (GGSGSGKS) lines the ATP pocket.

Belongs to the ABC transporter superfamily. Nickel importer (TC 3.A.1.5.3) family. In terms of assembly, the complex is composed of two ATP-binding proteins (NikD and NikE), two transmembrane proteins (NikB and NikC) and a solute-binding protein (NikA).

The protein resides in the cell inner membrane. It catalyses the reaction Ni(2+)(out) + ATP + H2O = Ni(2+)(in) + ADP + phosphate + H(+). In terms of biological role, part of the ABC transporter complex NikABCDE involved in nickel import. Responsible for energy coupling to the transport system. The sequence is that of Nickel import ATP-binding protein NikD from Shigella dysenteriae serotype 1 (strain Sd197).